A 1168-amino-acid chain; its full sequence is Zinc finger CCHC domain-containing protein 2 (1168 aa).

Disordered regions lie at residues 1-87 (MLRM…GGHA), 209-242 (EGSR…CAKL), 561-693 (KRSL…LGTE), and 932-978 (ATSA…SDST). Residues 43–66 (PPPPPPTGLPRGPPPPPPSPPRGL) are compositionally biased toward pro residues. The segment covering 67-78 (EPPVASGPTAGA) has biased composition (low complexity). Positions 216–227 (EDEPGGDDEQDA) are enriched in acidic residues. The span at 233–242 (GPEGGGCAKL) shows a compositional bias: gly residues. The span at 574 to 588 (PQVEKEKIKKTENRL) shows a compositional bias: basic and acidic residues. The segment covering 626–635 (SSESYSSPSS) has biased composition (low complexity). Positions 636-655 (PRHDGRESLESEEEKDRDTD) are enriched in basic and acidic residues. Residues 932–949 (ATSAQPASTGISPAQSTV) show a composition bias toward polar residues. The segment covering 951–965 (PAVPTHTPGPAPSPS) has biased composition (pro residues). Positions 966 to 978 (PALTHSTAQSDST) are enriched in polar residues. The CCHC-type zinc-finger motif lies at 1121 to 1138 (VSCYNCGVSGHYAQDCKQ).

The polypeptide is Zinc finger CCHC domain-containing protein 2 (Zcchc2) (Rattus norvegicus (Rat)).